The primary structure comprises 426 residues: Bifunctional protein GlmU (426 aa).

Positions 1-216 are pyrophosphorylase; sequence MSEVDVVILA…WHDILGVNTQ (216 aa). UDP-N-acetyl-alpha-D-glucosamine-binding positions include 9-12, lysine 23, and glutamine 69; that span reads LAAG. Aspartate 97 provides a ligand contact to Mg(2+). The UDP-N-acetyl-alpha-D-glucosamine site is built by glycine 132, glutamate 148, asparagine 163, and asparagine 214. Residue asparagine 214 coordinates Mg(2+). The segment at 217–237 is linker; it reads QQLAAVSKIARKRINDQIMAN. Residues 238 to 426 form an N-acetyltransferase region; the sequence is GVTMIDPLTT…AKHDQRDDQP (189 aa). Positions 286 and 304 each coordinate UDP-N-acetyl-alpha-D-glucosamine. Histidine 316 acts as the Proton acceptor in catalysis. The UDP-N-acetyl-alpha-D-glucosamine site is built by tyrosine 319 and asparagine 330. Acetyl-CoA-binding positions include alanine 333, 339 to 340, serine 358, alanine 376, and arginine 393; that span reads NY.

In the N-terminal section; belongs to the N-acetylglucosamine-1-phosphate uridyltransferase family. It in the C-terminal section; belongs to the transferase hexapeptide repeat family. As to quaternary structure, homotrimer. Mg(2+) is required as a cofactor.

The protein resides in the cytoplasm. The catalysed reaction is alpha-D-glucosamine 1-phosphate + acetyl-CoA = N-acetyl-alpha-D-glucosamine 1-phosphate + CoA + H(+). The enzyme catalyses N-acetyl-alpha-D-glucosamine 1-phosphate + UTP + H(+) = UDP-N-acetyl-alpha-D-glucosamine + diphosphate. It participates in nucleotide-sugar biosynthesis; UDP-N-acetyl-alpha-D-glucosamine biosynthesis; N-acetyl-alpha-D-glucosamine 1-phosphate from alpha-D-glucosamine 6-phosphate (route II): step 2/2. Its pathway is nucleotide-sugar biosynthesis; UDP-N-acetyl-alpha-D-glucosamine biosynthesis; UDP-N-acetyl-alpha-D-glucosamine from N-acetyl-alpha-D-glucosamine 1-phosphate: step 1/1. It functions in the pathway bacterial outer membrane biogenesis; LPS lipid A biosynthesis. Functionally, catalyzes the last two sequential reactions in the de novo biosynthetic pathway for UDP-N-acetylglucosamine (UDP-GlcNAc). The C-terminal domain catalyzes the transfer of acetyl group from acetyl coenzyme A to glucosamine-1-phosphate (GlcN-1-P) to produce N-acetylglucosamine-1-phosphate (GlcNAc-1-P), which is converted into UDP-GlcNAc by the transfer of uridine 5-monophosphate (from uridine 5-triphosphate), a reaction catalyzed by the N-terminal domain. The chain is Bifunctional protein GlmU from Oenococcus oeni (strain ATCC BAA-331 / PSU-1).